Consider the following 414-residue polypeptide: Na(+)-translocating NADH-quinone reductase subunit B (414 aa).

Transmembrane regions (helical) follow at residues 56–76 (IMIM…YNVG), 82–104 (ALNH…HYWL), 129–149 (FLPI…LFCM), and 164–184 (ILFA…LGIT). Thr236 is subject to FMN phosphoryl threonine. 5 consecutive transmembrane segments (helical) span residues 275–295 (VSTL…IASW), 297–317 (IIAG…VIGS), 325–345 (MPWH…FMAT), 358–378 (WAYG…NPAY), and 381–401 (GMML…HIVI).

The protein belongs to the NqrB/RnfD family. In terms of assembly, composed of six subunits; NqrA, NqrB, NqrC, NqrD, NqrE and NqrF. FMN is required as a cofactor.

The protein resides in the cell inner membrane. The enzyme catalyses a ubiquinone + n Na(+)(in) + NADH + H(+) = a ubiquinol + n Na(+)(out) + NAD(+). Functionally, NQR complex catalyzes the reduction of ubiquinone-1 to ubiquinol by two successive reactions, coupled with the transport of Na(+) ions from the cytoplasm to the periplasm. NqrA to NqrE are probably involved in the second step, the conversion of ubisemiquinone to ubiquinol. In Vibrio anguillarum (Listonella anguillarum), this protein is Na(+)-translocating NADH-quinone reductase subunit B.